Consider the following 94-residue polypeptide: Putative membrane protein insertion efficiency factor (94 aa).

This sequence belongs to the UPF0161 family.

The protein resides in the cell inner membrane. In terms of biological role, could be involved in insertion of integral membrane proteins into the membrane. This chain is Putative membrane protein insertion efficiency factor, found in Albidiferax ferrireducens (strain ATCC BAA-621 / DSM 15236 / T118) (Rhodoferax ferrireducens).